The primary structure comprises 115 residues: U3-lycotoxin-Ls1a (115 aa).

Residues Met-1–Ala-20 form the signal peptide. The propeptide occupies Glu-21 to Arg-44. 4 cysteine pairs are disulfide-bonded: Cys-48–Cys-63, Cys-55–Cys-72, Cys-62–Cys-87, and Cys-74–Cys-85.

The protein belongs to the neurotoxin 19 (CSTX) family. 01 subfamily. As to expression, expressed by the venom gland.

It localises to the secreted. The sequence is that of U3-lycotoxin-Ls1a from Lycosa singoriensis (Wolf spider).